The chain runs to 139 residues: MIENKKKPNPIDIHVGSRIRLRRTMLGMSQEKLGESLGITFQQIQKYEKGTNRVGASRLQNISQILNVPVSFFFEDAPGDGGGTGPGMAEASSSNYVVDFLSSSEGLQLNRAFVKISDPKVRRKLVDLVKALAAEAESE.

One can recognise an HTH cro/C1-type domain in the interval 19 to 73 (IRLRRTMLGMSQEKLGESLGITFQQIQKYEKGTNRVGASRLQNISQILNVPVSFF). Positions 30–49 (QEKLGESLGITFQQIQKYEK) form a DNA-binding region, H-T-H motif.

This is an uncharacterized protein from Rhizobium meliloti (strain 1021) (Ensifer meliloti).